We begin with the raw amino-acid sequence, 554 residues long: Acetyl-S-ACP:malonate ACP transferase (554 aa).

The protein localises to the cytoplasm. It carries out the reaction acetyl-[ACP] + malonate = malonyl-[ACP] + acetate. Its function is as follows. Alpha subunit of the biotin-independent and biotin-dependent malonate decarboxylase multienzyme complex (EC 4.1.1.88 and EC 7.2.4.4, respectively). Acts as an acyl-carrier protein (ACP) transferase component. This first step in malonate decarboxylation involves the exchange of an acetyl thioester residue bound to the activated ACP subunit for a malonyl thioester residue. Has a weak activity with acetyl-CoA as substrate. This Malonomonas rubra protein is Acetyl-S-ACP:malonate ACP transferase (madA).